Reading from the N-terminus, the 416-residue chain is MPEHSDASLPPEERIRALVLKGTSVEVNDDIPPKRYYRSGVELIRMANVYSGEGSIENAFILYNKYITLFIEKLPKHRDYKTANVPEKKETLKKLKEIAFPKAEELKKELHKRYKKEYEEYSEKQRKEEEERARRLALQQQLDAEKQRVALLKQQQEQQEQVQAFEEMMRRKELEAERLRILHQFSKDEPEAEPLGSPLIPGMNEPPVTPLLPSYGTVQPHPPAVDRSLKPSSYGSNSSGVTSDGLRHVKIPRDVCCKFLQLSENNTQRGVETCGILCGKLLQNEFTVTHVIVPKQSGGPDYCNTESEEELFLIQDQQGLITLGWIHTHPTQTAFLSSVDLHTHCSYQMMLPESIAIVCSPKFQETGFFKLTDYGMKEIGECRQKGFHPHCKEPPLFSAGGHVSVTEQDVTMMDLR.

Residues 214–244 are disordered; it reads SYGTVQPHPPAVDRSLKPSSYGSNSSGVTSD. Over residues 230-243 the composition is skewed to low complexity; the sequence is KPSSYGSNSSGVTS. An MPN domain is found at 249-380; the sequence is VKIPRDVCCK…LTDYGMKEIG (132 aa). Residues His-327, His-329, Asp-340, His-342, Cys-382, His-388, and His-390 each contribute to the Zn(2+) site. Positions 327-340 match the JAMM motif motif; it reads HTHPTQTAFLSSVD.

It belongs to the peptidase M67C family. Zn(2+) is required as a cofactor.

Functionally, zinc metalloprotease that specifically cleaves 'Lys-63'-linked polyubiquitin chains. Does not cleave 'Lys-48'-linked polyubiquitin chains. Functions at the endosome and is able to oppose the ubiquitin-dependent sorting of receptors to lysosomes. This chain is STAM-binding protein-like (stambp), found in Xenopus laevis (African clawed frog).